A 134-amino-acid polypeptide reads, in one-letter code: Holo-[acyl-carrier-protein] synthase (134 aa).

Positions 8 and 57 each coordinate Mg(2+).

The protein belongs to the P-Pant transferase superfamily. AcpS family. Mg(2+) is required as a cofactor.

Its subcellular location is the cytoplasm. It catalyses the reaction apo-[ACP] + CoA = holo-[ACP] + adenosine 3',5'-bisphosphate + H(+). Transfers the 4'-phosphopantetheine moiety from coenzyme A to a Ser of acyl-carrier-protein. This chain is Holo-[acyl-carrier-protein] synthase, found in Rhizobium etli (strain ATCC 51251 / DSM 11541 / JCM 21823 / NBRC 15573 / CFN 42).